The sequence spans 65 residues: MNMRNINVITVLSVPGKTVSDDFMHAVLSNCATRIVLPAPEKFGSESLPDNFNMTAVGVMKNSEI.

This is Protein TrbD (trbD) from Escherichia coli (strain K12).